The sequence spans 248 residues: Aspartate/glutamate leucyltransferase (248 aa).

Belongs to the R-transferase family. Bpt subfamily.

It is found in the cytoplasm. It carries out the reaction N-terminal L-glutamyl-[protein] + L-leucyl-tRNA(Leu) = N-terminal L-leucyl-L-glutamyl-[protein] + tRNA(Leu) + H(+). The enzyme catalyses N-terminal L-aspartyl-[protein] + L-leucyl-tRNA(Leu) = N-terminal L-leucyl-L-aspartyl-[protein] + tRNA(Leu) + H(+). Functions in the N-end rule pathway of protein degradation where it conjugates Leu from its aminoacyl-tRNA to the N-termini of proteins containing an N-terminal aspartate or glutamate. This is Aspartate/glutamate leucyltransferase from Methylobacterium nodulans (strain LMG 21967 / CNCM I-2342 / ORS 2060).